The primary structure comprises 122 residues: MVQLESKIRVADNSGAKVLRVIKVLGGFHKSKGTVGDTVVCSVREAIPHTDLKKGQVVQAVIVRTKKEIRRKDGTYIRFDDNAAVLIDKNKLPLGTRVFGPVAREVREKGYAKIASLAKEVW.

It belongs to the universal ribosomal protein uL14 family. Part of the 50S ribosomal subunit. Forms a cluster with proteins L3 and L19. In the 70S ribosome, L14 and L19 interact and together make contacts with the 16S rRNA in bridges B5 and B8.

In terms of biological role, binds to 23S rRNA. Forms part of two intersubunit bridges in the 70S ribosome. This is Large ribosomal subunit protein uL14 from Petrotoga mobilis (strain DSM 10674 / SJ95).